The primary structure comprises 106 residues: MSTESALSYAALILADSEIEISSEKLLTLTNAANVPVENIWADIFAKALDGQNLKDLLVNFSAGAAAPAGVAGGVAGGEAGEAEAEKEEEEAKEESDDDMGFGLFD.

Serine 2 is subject to N-acetylserine. Residues 73 to 106 are disordered; the sequence is GGVAGGEAGEAEAEKEEEEAKEESDDDMGFGLFD. Residues 81–100 show a composition bias toward acidic residues; the sequence is GEAEAEKEEEEAKEESDDDM. Phosphoserine is present on serine 96.

It belongs to the eukaryotic ribosomal protein P1/P2 family. As to quaternary structure, component of the large ribosomal subunit (LSU). Mature yeast ribosomes consist of a small (40S) and a large (60S) subunit. The 40S small subunit contains 1 molecule of ribosomal RNA (18S rRNA) and 33 different proteins (encoded by 57 genes). The large 60S subunit contains 3 rRNA molecules (25S, 5.8S and 5S rRNA) and 46 different proteins (encoded by 81 genes). The 5 acidic ribosomal P-proteins form the stalk structure of the 60S subunit. They are organized as a pentameric complex in which uL10/P0 interacts with 2 heterodimers, P1A-P2B and P1B-P2A. Post-translationally, N-terminally acetylated by acetyltransferase NatA.

Its subcellular location is the cytoplasm. Functionally, component of the ribosome, a large ribonucleoprotein complex responsible for the synthesis of proteins in the cell. The small ribosomal subunit (SSU) binds messenger RNAs (mRNAs) and translates the encoded message by selecting cognate aminoacyl-transfer RNA (tRNA) molecules. The large subunit (LSU) contains the ribosomal catalytic site termed the peptidyl transferase center (PTC), which catalyzes the formation of peptide bonds, thereby polymerizing the amino acids delivered by tRNAs into a polypeptide chain. The nascent polypeptides leave the ribosome through a tunnel in the LSU and interact with protein factors that function in enzymatic processing, targeting, and the membrane insertion of nascent chains at the exit of the ribosomal tunnel. The chain is Large ribosomal subunit protein P1A from Saccharomyces cerevisiae (strain ATCC 204508 / S288c) (Baker's yeast).